We begin with the raw amino-acid sequence, 560 residues long: DNA ligase B (560 aa).

Lysine 124 functions as the N6-AMP-lysine intermediate in the catalytic mechanism.

The protein belongs to the NAD-dependent DNA ligase family. LigB subfamily.

The enzyme catalyses NAD(+) + (deoxyribonucleotide)n-3'-hydroxyl + 5'-phospho-(deoxyribonucleotide)m = (deoxyribonucleotide)n+m + AMP + beta-nicotinamide D-nucleotide.. Functionally, catalyzes the formation of phosphodiester linkages between 5'-phosphoryl and 3'-hydroxyl groups in double-stranded DNA using NAD as a coenzyme and as the energy source for the reaction. This chain is DNA ligase B, found in Escherichia coli O6:K15:H31 (strain 536 / UPEC).